Here is a 361-residue protein sequence, read N- to C-terminus: Porphobilinogen deaminase (361 aa).

S-(dipyrrolylmethanemethyl)cysteine is present on cysteine 265. Residues 341 to 361 (LPPSSNTPTPQPITPITTNNS) form a disordered region.

Belongs to the HMBS family. Requires dipyrromethane as cofactor.

The catalysed reaction is 4 porphobilinogen + H2O = hydroxymethylbilane + 4 NH4(+). It participates in porphyrin-containing compound metabolism; protoporphyrin-IX biosynthesis; coproporphyrinogen-III from 5-aminolevulinate: step 2/4. Functionally, tetrapolymerization of the monopyrrole PBG into the hydroxymethylbilane pre-uroporphyrinogen in several discrete steps. This chain is Porphobilinogen deaminase (HEM3), found in Debaryomyces hansenii (strain ATCC 36239 / CBS 767 / BCRC 21394 / JCM 1990 / NBRC 0083 / IGC 2968) (Yeast).